Consider the following 185-residue polypeptide: Dual specificity protein phosphatase 3 (185 aa).

Residues 28–179 form the Tyrosine-protein phosphatase domain; the sequence is QPCNEVVPRV…LCQLNDRLAK (152 aa). C124 acts as the Phosphocysteine intermediate in catalysis.

The protein belongs to the protein-tyrosine phosphatase family. Non-receptor class dual specificity subfamily. As to quaternary structure, microtubule inner protein component of sperm flagellar doublet microtubules. Interacts with VRK3; this interaction activates DUSP3 phosphatase activity.

Its subcellular location is the nucleus. It localises to the cytoplasm. It is found in the cytoskeleton. The protein resides in the flagellum axoneme. The enzyme catalyses O-phospho-L-tyrosyl-[protein] + H2O = L-tyrosyl-[protein] + phosphate. It carries out the reaction O-phospho-L-seryl-[protein] + H2O = L-seryl-[protein] + phosphate. It catalyses the reaction O-phospho-L-threonyl-[protein] + H2O = L-threonyl-[protein] + phosphate. Functionally, shows activity both for tyrosine-protein phosphate and serine-protein phosphate, but displays a strong preference toward phosphotyrosines. Specifically dephosphorylates and inactivates ERK1 and ERK2. The protein is Dual specificity protein phosphatase 3 (Dusp3) of Mus musculus (Mouse).